The sequence spans 291 residues: ATP synthase gamma chain (291 aa).

It belongs to the ATPase gamma chain family. As to quaternary structure, F-type ATPases have 2 components, CF(1) - the catalytic core - and CF(0) - the membrane proton channel. CF(1) has five subunits: alpha(3), beta(3), gamma(1), delta(1), epsilon(1). CF(0) has three main subunits: a, b and c.

The protein resides in the cell inner membrane. Functionally, produces ATP from ADP in the presence of a proton gradient across the membrane. The gamma chain is believed to be important in regulating ATPase activity and the flow of protons through the CF(0) complex. In Pelodictyon phaeoclathratiforme (strain DSM 5477 / BU-1), this protein is ATP synthase gamma chain.